The chain runs to 531 residues: 2,3-bisphosphoglycerate-independent phosphoglycerate mutase (531 aa).

Mn(2+) contacts are provided by Asp-13 and Ser-63. The active-site Phosphoserine intermediate is the Ser-63. Substrate contacts are provided by residues His-124, 154–155 (RD), Arg-187, Arg-193, 261–264 (RPDR), and Lys-342. The Mn(2+) site is built by Asp-420, His-424, Asp-462, His-463, and His-480.

It belongs to the BPG-independent phosphoglycerate mutase family. Monomer. Mn(2+) is required as a cofactor.

It catalyses the reaction (2R)-2-phosphoglycerate = (2R)-3-phosphoglycerate. Its pathway is carbohydrate degradation; glycolysis; pyruvate from D-glyceraldehyde 3-phosphate: step 3/5. In terms of biological role, catalyzes the interconversion of 2-phosphoglycerate and 3-phosphoglycerate. The protein is 2,3-bisphosphoglycerate-independent phosphoglycerate mutase of Mycoplasma mycoides subsp. mycoides SC (strain CCUG 32753 / NCTC 10114 / PG1).